A 162-amino-acid polypeptide reads, in one-letter code: Non-specific lipid transfer protein GPI-anchored 27 (162 aa).

Residues 1–29 (MAYTNKVAVAVGAAVVFLAVVMNPRWTEA) form the signal peptide. 4 cysteine pairs are disulfide-bonded: Cys-39–Cys-78, Cys-50–Cys-62, Cys-63–Cys-102, and Cys-76–Cys-110. Asn-68 is a glycosylation site (N-linked (GlcNAc...) asparagine). Residues Asn-124 and Asn-135 are each glycosylated (N-linked (GlcNAc...) asparagine). Ser-137 carries the GPI-anchor amidated serine lipid modification. A propeptide spans 138 to 162 (VGGKNKVATSMSAFGLVAILLFVMF) (removed in mature form).

The protein belongs to the plant LTP family.

Its subcellular location is the cell membrane. In terms of biological role, probable lipid transfer protein. The chain is Non-specific lipid transfer protein GPI-anchored 27 from Arabidopsis thaliana (Mouse-ear cress).